Reading from the N-terminus, the 213-residue chain is Vacuolar ATPase assembly integral membrane protein vph2 (213 aa).

2 consecutive transmembrane segments (helical) span residues 113 to 133 (ISAI…VWYC) and 142 to 162 (KIAL…FLYV).

Its subcellular location is the endoplasmic reticulum membrane. In terms of biological role, required for vacuolar ATPase assembly. The protein is Vacuolar ATPase assembly integral membrane protein vph2 (vph2) of Schizosaccharomyces pombe (strain 972 / ATCC 24843) (Fission yeast).